Here is a 3224-residue protein sequence, read N- to C-terminus: E3 SUMO-protein ligase RanBP2 (3224 aa).

The residue at position 19 (Thr19) is a Phosphothreonine. A Phosphoserine modification is found at Ser21. TPR repeat units follow at residues 26-59 (SIKGFYFAKLYYEAKEYDLAKKYICTYINVQERD), 60-93 (PKAHRFLGLLYELEENTDKAVECYRRSVELNPTQ), 94-128 (KDLVLKIAELLCKNDVTDGRAKYWVERAAKLFPGS), 165-201 (VHVNIRLVEVYRSTKRLKDAVAHCHEAERNIALRSSL), 287-319 (GHFYMHAGSLLLKMGQHSSNVQWRALSELAALC), 583-616 (QKTGSGLNSFYDQREYIGRSVHYWKKVLPLLKII), and 648-681 (EDAHITFAILDVVNGNIEDAMTAFESIQSVVSYW). Residues 767–802 (SLRNADSEIKHSTPSHTRYSLSPSKSYKYSPKTPPR) are disordered. Residue Thr779 is modified to Phosphothreonine. Phosphoserine occurs at positions 781, 788, and 837. A compositionally biased stretch (low complexity) spans 785 to 797 (YSLSPSKSYKYSP). Arg945 carries the asymmetric dimethylarginine modification. Ser948 and Ser955 each carry phosphoserine. Repeat unit 1 spans residues 1001–1002 (FG). Residues 1001-3206 (FGKTNFVQPM…DTVKKIESFG (2206 aa)) are 22 X 2 AA repeats of F-G. Arg1016 is modified (asymmetric dimethylarginine; alternate). The residue at position 1016 (Arg1016) is an Omega-N-methylarginine; alternate. Thr1098 is modified (phosphothreonine). Residues 1101–1102 (FG) form repeat 2. Phosphoserine occurs at positions 1103, 1107, and 1110. Residues 1138 to 1174 (GKSVFGTPTLETANKNHETDGGSAHGDDDDDGPHFEP) form a disordered region. Repeat unit 3 spans residues 1142 to 1143 (FG). At Thr1144 the chain carries Phosphothreonine. Residues Ser1160 and Ser1249 each carry the phosphoserine modification. Residues 1171–1307 (HFEPVVPLPD…FEEAQSILKA (137 aa)) form the RanBD1 1 domain. Lys1350 is covalently cross-linked (Glycyl lysine isopeptide (Lys-Gly) (interchain with G-Cter in SUMO2)). The RanBP2-type 1 zinc-finger motif lies at 1351–1381 (KEGSWWHCNSCSLKNASTAKKCVSCQNLNPS). Residues Thr1396 and Thr1412 each carry the phosphothreonine modification. Lys1414 participates in a covalent cross-link: Glycyl lysine isopeptide (Lys-Gly) (interchain with G-Cter in SUMO2). The RanBP2-type 2 zinc finger occupies 1415-1444 (KEGHWDCSICLVRNEPTVSRCIACQNTKSA). Ser1443, Ser1450, and Ser1456 each carry phosphoserine. Copy 4 of the repeat occupies 1459 to 1460 (FG). A RanBP2-type 3 zinc finger spans residues 1479-1508 (KEGQWDCSACLVQNEGSSTKCAACQNPRKQ). Phosphoserine is present on residues Ser1509 and Ser1520. The stretch at 1523–1524 (FG) is repeat 5. A RanBP2-type 4 zinc finger spans residues 1543-1572 (KEGQWDCSSCLVRNEANATRCVACQNPDKP). A disordered region spans residues 1569–1595 (PDKPSPSTSVPAPASFKFGTSETSKAP). At Ser1573 the chain carries Phosphoserine. The span at 1573–1583 (SPSTSVPAPAS) shows a compositional bias: low complexity. Repeat unit 6 spans residues 1586-1587 (FG). A Glycyl lysine isopeptide (Lys-Gly) (interchain with G-Cter in SUMO2) cross-link involves residue Lys1596. Residue Lys1605 forms a Glycyl lysine isopeptide (Lys-Gly) (interchain with G-Cter in SUMO1); alternate linkage. A Glycyl lysine isopeptide (Lys-Gly) (interchain with G-Cter in SUMO2); alternate cross-link involves residue Lys1605. Residues 1606–1635 (KEGQWDCSVCLVRNEASATKCVACQNPGKQ) form a RanBP2-type 5 zinc finger. The segment covering 1632–1653 (PGKQNQTTSAVSTPASSETSRA) has biased composition (polar residues). The tract at residues 1632-1657 (PGKQNQTTSAVSTPASSETSRAPKSG) is disordered. A Glycyl lysine isopeptide (Lys-Gly) (interchain with G-Cter in SUMO2) cross-link involves residue Lys1655. Lys1664 is covalently cross-linked (Glycyl lysine isopeptide (Lys-Gly) (interchain with G-Cter in SUMO1); alternate). Residue Lys1664 forms a Glycyl lysine isopeptide (Lys-Gly) (interchain with G-Cter in SUMO2); alternate linkage. The RanBP2-type 6 zinc finger occupies 1665–1694 (KEGQWDCSVCLVRNEASATKCIACQSPGKQ). Positions 1691–1712 (PGKQNQTTSAVSTPASSETSKA) are enriched in polar residues. Positions 1691-1716 (PGKQNQTTSAVSTPASSETSKAPKSG) are disordered. Residue Lys1714 forms a Glycyl lysine isopeptide (Lys-Gly) (interchain with G-Cter in SUMO2) linkage. Lys1723 participates in a covalent cross-link: Glycyl lysine isopeptide (Lys-Gly) (interchain with G-Cter in SUMO1); alternate. Lys1723 participates in a covalent cross-link: Glycyl lysine isopeptide (Lys-Gly) (interchain with G-Cter in SUMO2); alternate. 2 RanBP2-type zinc fingers span residues 1724–1753 (KEGQWDCSVCLVRNEASATKCIACQCPSKQ) and 1781–1810 (RKGQWDCSVCCVQNESSSLKCVACDASKPT). Ser1835 carries the phosphoserine modification. 2 consecutive repeat copies span residues 1852-1853 (FG) and 1861-1862 (FG). A phosphoserine mark is found at Ser1869 and Ser1871. 3 tandem repeats follow at residues 1900-1901 (FG), 1938-1939 (FG), and 1961-1962 (FG). Lys1977 carries the post-translational modification N6-acetyllysine. The residue at position 2005 (Thr2005) is a Phosphothreonine. A Phosphoserine modification is found at Ser2008. One can recognise a RanBD1 2 domain in the interval 2012–2148 (HFEPVVQMPE…FEECQRLLLD (137 aa)). Lys2022 participates in a covalent cross-link: Glycyl lysine isopeptide (Lys-Gly) (interchain with G-Cter in SUMO2). Positions 2147–2287 (LDIPLQTPHK…SKSPGKLNQS (141 aa)) are interaction with BICD2. Residue Thr2153 is modified to Phosphothreonine. Positions 2188–2224 (QTKVTEEENKGSGTGAAGASDTTIKPNPENTGPTLEW) are disordered. A compositionally biased stretch (polar residues) spans 2211–2220 (IKPNPENTGP). 2 positions are modified to phosphoserine: Ser2246 and Ser2251. Repeat 12 spans residues 2260-2261 (FG). Ser2270, Ser2280, and Ser2290 each carry phosphoserine. Positions 2274–2292 (ALSPSKSPGKLNQSGTSVG) are enriched in polar residues. Residues 2274 to 2307 (ALSPSKSPGKLNQSGTSVGTDEESDVTQEEERDG) form a disordered region. Position 2293 is a phosphothreonine (Thr2293). Residues 2293–2305 (TDEESDVTQEEER) show a composition bias toward acidic residues. The residue at position 2297 (Ser2297) is a Phosphoserine. Residues 2309–2445 (YFEPVVPLPD…FDEAKTAQEK (137 aa)) form the RanBD1 3 domain. Ser2462, Ser2493, and Ser2510 each carry phosphoserine. Repeat 13 spans residues 2516-2517 (FG). Lys2522 is covalently cross-linked (Glycyl lysine isopeptide (Lys-Gly) (interchain with G-Cter in SUMO2)). Residue Ser2526 is modified to Phosphoserine. Repeat copies occupy residues 2535–2536 (FG) and 2545–2546 (FG). The span at 2556-2569 (NNSETSSVAQSGSE) shows a compositional bias: polar residues. The disordered stretch occupies residues 2556-2629 (NNSETSSVAQ…KKKPEDSPSD (74 aa)). Residues 2570–2593 (SKVEPNKCELSKNSDIEQSSDSKV) are compositionally biased toward basic and acidic residues. Lys2592 participates in a covalent cross-link: Glycyl lysine isopeptide (Lys-Gly) (interchain with G-Cter in SUMO). Residue Lys2594 forms a Glycyl lysine isopeptide (Lys-Gly) (interchain with G-Cter in SUMO1); alternate linkage. Residue Lys2594 forms a Glycyl lysine isopeptide (Lys-Gly) (interchain with G-Cter in SUMO2); alternate linkage. Residues 2594 to 2611 (KNLSASFPTEESSINYTF) show a composition bias toward polar residues. Lys2612 participates in a covalent cross-link: Glycyl lysine isopeptide (Lys-Gly) (interchain with G-Cter in SUMO2). Position 2613 is a phosphothreonine (Thr2613). Positions 2613–2625 (TPEKAKEKKKPED) are enriched in basic and acidic residues. Residues 2631-2635 (DVLIV) form an interaction with sumoylated RANGAP1 region. 2 repeat units span residues 2633 to 2685 (LIVY…KKLN) and 2711 to 2761 (IIVW…QKVQ). The segment at 2633-2685 (LIVYELTPTAEQKALATKLKLPPTFFCYKNRPDYVSEEEEDDEDFETAVKKLN) is interaction with UBE2I. The required for E3 SUMO-ligase activity stretch occupies residues 2633 to 2710 (LIVYELTPTA…ENTADNEKEC (78 aa)). Residues 2633–2761 (LIVYELTPTA…DFQSELQKVQ (129 aa)) are 2 X 50 AA approximate repeats. Tyr2666 carries the post-translational modification Phosphotyrosine. Phosphoserine occurs at positions 2668 and 2741. Residues 2686–2761 (GKLYLEGSEK…DFQSELQKVQ (76 aa)) are interaction with SUMO1. The residue at position 2743 (Thr2743) is a Phosphothreonine. A disordered region spans residues 2791–2818 (CKSEEPDSITKSISSPSVSSETMDKPVD). Lys2792 participates in a covalent cross-link: Glycyl lysine isopeptide (Lys-Gly) (interchain with G-Cter in SUMO2). Positions 2799–2810 (ITKSISSPSVSS) are enriched in low complexity. Position 2805 is a phosphoserine (Ser2805). Residue Lys2815 forms a Glycyl lysine isopeptide (Lys-Gly) (interchain with G-Cter in SUMO2) linkage. 4 consecutive repeat copies span residues 2840–2841 (FG), 2842–2843 (FG), 2863–2864 (FG), and 2880–2881 (FG). At Ser2900 the chain carries Phosphoserine. One can recognise a RanBD1 4 domain in the interval 2911–3046 (HFEPIVSLPE…FEECQQNLMK (136 aa)). The 157-residue stretch at 3067-3223 (FFDVCADGEP…RRITITECGQ (157 aa)) folds into the PPIase cyclophilin-type domain. Tandem repeats lie at residues 3106-3107 (FG), 3189-3190 (FG), and 3205-3206 (FG). The residue at position 3207 (Ser3207) is a Phosphoserine.

Belongs to the RanBP2 E3 ligase family. As to quaternary structure, part of the nuclear pore complex. Forms a complex with NXT1, NXF1 and RANGAP1. Forms a tight complex with RANBP1 and UBE2I. Interacts with SUMO1 but not SUMO2. Interacts with PRKN. Interacts with sumoylated RANGAP1. Interacts with CDCA8. Interacts with PML (isoform PML-4). Interacts with BICD2. Interacts with MCM3AP isoform GANP. Interacts with COX11. Interacts with synaptic plasticity regulator PANTS. In terms of processing, polyubiquitinated by PRKN, which leads to proteasomal degradation. The inner channel of the NPC has a different redox environment from the cytoplasm and allows the formation of interchain disulfide bonds between some nucleoporins, the significant increase of these linkages upon oxidative stress reduces the permeability of the NPC.

The protein resides in the nucleus. It localises to the nucleus membrane. The protein localises to the nuclear pore complex. Its subcellular location is the nucleus envelope. Its pathway is protein modification; protein sumoylation. E3 SUMO-protein ligase which facilitates SUMO1 and SUMO2 conjugation by UBE2I. Involved in transport factor (Ran-GTP, karyopherin)-mediated protein import via the F-G repeat-containing domain which acts as a docking site for substrates. Component of the nuclear export pathway. Specific docking site for the nuclear export factor exportin-1. Inhibits EIF4E-dependent mRNA export. Sumoylates PML at 'Lys-490' which is essential for the proper assembly of PML-NB. Recruits BICD2 to the nuclear envelope and cytoplasmic stacks of nuclear pore complex known as annulate lamellae during G2 phase of cell cycle. Binds single-stranded RNA (in vitro). Probable inactive PPIase with no peptidyl-prolyl cis-trans isomerase activity. This chain is E3 SUMO-protein ligase RanBP2 (RANBP2), found in Pan troglodytes (Chimpanzee).